A 394-amino-acid polypeptide reads, in one-letter code: Obg-like ATPase 1 (394 aa).

Residues 25-282 (LKIGIVGLPN…MPPDEAAKYC (258 aa)) enclose the OBG-type G domain. Residues 34–39 (NVGKST), 56–60 (FCTID), and 94–97 (DIAG) contribute to the ATP site. Mg(2+)-binding residues include serine 38 and threonine 58. Position 129 (phenylalanine 129) interacts with GTP. Residues 230–231 (NM), methionine 231, and 263–265 (SCA) contribute to the ATP site. Position 263–265 (263–265 (SCA)) interacts with GTP. The TGS domain occupies 303 to 386 (HLIYFFTAGP…QDADIIFFKF (84 aa)).

Belongs to the TRAFAC class OBG-HflX-like GTPase superfamily. OBG GTPase family. YchF/OLA1 subfamily. In terms of assembly, monomer (Potential). Interacts with GAP1. It depends on Mg(2+) as a cofactor.

It is found in the cytoplasm. It localises to the cell membrane. The protein resides in the cytosol. Its activity is regulated as follows. Activated by GAP1. In terms of biological role, hydrolyzes ATP, and can also hydrolyze GTP with lower efficiency. Has lower affinity for GTP (Potential). Exhibits GTPase activity. Exhibits similar binding affinities and hydrolytic activities toward both GTP and ATP. Binds to the 26 S ribosomal RNA in vitro, but not to the 5.8 S or 18 S rRNA. Confers sensitivity to salinity stress by suppressing the anti-oxidation enzymatic activities and increasing lipid peroxidation thus leading to the accumulation of reactive oxygen species (ROS). This is Obg-like ATPase 1 from Oryza sativa subsp. indica (Rice).